The chain runs to 1368 residues: DNA-directed RNA polymerase subunit beta (1368 aa).

This sequence belongs to the RNA polymerase beta chain family. The RNAP catalytic core consists of 2 alpha, 1 beta, 1 beta' and 1 omega subunit. When a sigma factor is associated with the core the holoenzyme is formed, which can initiate transcription.

It carries out the reaction RNA(n) + a ribonucleoside 5'-triphosphate = RNA(n+1) + diphosphate. Its function is as follows. DNA-dependent RNA polymerase catalyzes the transcription of DNA into RNA using the four ribonucleoside triphosphates as substrates. This chain is DNA-directed RNA polymerase subunit beta, found in Burkholderia cenocepacia (strain ATCC BAA-245 / DSM 16553 / LMG 16656 / NCTC 13227 / J2315 / CF5610) (Burkholderia cepacia (strain J2315)).